A 340-amino-acid chain; its full sequence is Eukaryotic translation initiation factor 3 subunit I (340 aa).

WD repeat units lie at residues 8–47, 50–91, 150–189, 194–233, and 291–330; these read GHER…RLGT, GHQG…KVWD, CTES…QLEN, EFDH…ILKT, and GHFG…FDFM.

This sequence belongs to the eIF-3 subunit I family. In terms of assembly, component of the eukaryotic translation initiation factor 3 (eIF-3) complex.

It is found in the cytoplasm. In terms of biological role, component of the eukaryotic translation initiation factor 3 (eIF-3) complex, which is involved in protein synthesis of a specialized repertoire of mRNAs and, together with other initiation factors, stimulates binding of mRNA and methionyl-tRNAi to the 40S ribosome. The eIF-3 complex specifically targets and initiates translation of a subset of mRNAs involved in cell proliferation. This is Eukaryotic translation initiation factor 3 subunit I (tif34) from Aspergillus fumigatus (strain CBS 144.89 / FGSC A1163 / CEA10) (Neosartorya fumigata).